The primary structure comprises 92 residues: Bombyxin A-3 (92 aa).

Residues Met1–Thr19 form the signal peptide. Gln20 carries the pyrrolidone carboxylic acid modification. 3 cysteine pairs are disulfide-bonded: Cys29/Cys79, Cys41/Cys92, and Cys78/Cys83. The propeptide at Ser50–Gly70 is c peptide like.

The protein belongs to the insulin family. In terms of assembly, heterodimer of a B chain and an A chain linked by two disulfide bonds.

The protein localises to the secreted. Its function is as follows. Brain peptide responsible for activation of prothoracic glands to produce ecdysone in insects. The chain is Bombyxin A-3 (BBXA3) from Bombyx mori (Silk moth).